A 157-amino-acid polypeptide reads, in one-letter code: Transcription elongation factor GreA (157 aa).

A coiled-coil region spans residues Ser47–Glu75.

It belongs to the GreA/GreB family.

Functionally, necessary for efficient RNA polymerase transcription elongation past template-encoded arresting sites. The arresting sites in DNA have the property of trapping a certain fraction of elongating RNA polymerases that pass through, resulting in locked ternary complexes. Cleavage of the nascent transcript by cleavage factors such as GreA or GreB allows the resumption of elongation from the new 3'terminus. GreA releases sequences of 2 to 3 nucleotides. The polypeptide is Transcription elongation factor GreA (Chloroflexus aurantiacus (strain ATCC 29366 / DSM 635 / J-10-fl)).